A 239-amino-acid polypeptide reads, in one-letter code: Peroxygenase (239 aa).

N-acetylglycine is present on glycine 2. In terms of domain architecture, EF-hand spans 60–95; that stretch reads HNMSVLQQRAAFFDRNNDGIVYPWETYQGFRAVGFG. Ca(2+) contacts are provided by aspartate 73, asparagine 75, aspartate 77, and glutamate 84. A Proline-knot motif is present at residues 116–125; the sequence is PSWIPSPVLS.

The protein belongs to the caleosin family. As to quaternary structure, homodimer. Requires heme b as cofactor. Ca(2+) serves as cofactor. In terms of tissue distribution, expressed in pollen (at protein level). Not expressed in leaf, root, stem, tepal, ovary, style, filament or stigma (at protein level).

It is found in the lipid droplet. It localises to the microsome membrane. The catalysed reaction is RH + ROOH = ROH + ROH.. Functionally, calcium-binding peroxygenase involved in the degradation of storage lipid in oil bodies. The polypeptide is Peroxygenase (Lilium longiflorum (Trumpet lily)).